The sequence spans 438 residues: uncharacterized protein (438 aa).

The first 19 residues, 1–19, serve as a signal peptide directing secretion; the sequence is MKKLLLAASIICLASAGLA.

This is an uncharacterized protein from Rickettsia conorii (strain ATCC VR-613 / Malish 7).